Here is a 319-residue protein sequence, read N- to C-terminus: Sphingomyelinase D (319 aa).

An N-terminal signal peptide occupies residues 1–23; sequence MTPLLRTICAILCILIAVPLTFA. His-44 is a catalytic residue. Residues Glu-64, Asp-66, and Asp-109 each coordinate Mg(2+). Positions 312 to 319 match the SMD-tail motif; sequence ATGADKPW.

The protein belongs to the sphingomyelinase D/phospholipase D family. Requires Mg(2+) as cofactor.

It is found in the secreted. The enzyme catalyses a sphingomyelin + H2O = an N-acylsphing-4-enine 1-phosphate + choline + H(+). Functionally, catalyzes the hydrolysis of sphingomyelin. Sphingomyelinases D are produced by some spider in their venoms, but also by arthropods such as ticks, or pathogenic bacteria and fungi. They might play a role in pathogenicity through different mechanisms, such as membrane destabilization and host cell penetration, but also pulmonary inflammation and cutaneous lesions. In Ajellomyces capsulatus (strain G186AR / H82 / ATCC MYA-2454 / RMSCC 2432) (Darling's disease fungus), this protein is Sphingomyelinase D.